The sequence spans 570 residues: Hydroxylamine reductase (570 aa).

Positions 5, 8, 17, and 23 each coordinate [4Fe-4S] cluster. Hybrid [4Fe-2O-2S] cluster-binding residues include H266, E290, C334, C425, C453, C478, E513, and K515. C425 carries the cysteine persulfide modification.

This sequence belongs to the HCP family. It depends on [4Fe-4S] cluster as a cofactor. Requires hybrid [4Fe-2O-2S] cluster as cofactor.

The protein resides in the cytoplasm. It catalyses the reaction A + NH4(+) + H2O = hydroxylamine + AH2 + H(+). Catalyzes the reduction of hydroxylamine to form NH(3) and H(2)O. The polypeptide is Hydroxylamine reductase (Clostridium botulinum (strain Langeland / NCTC 10281 / Type F)).